The chain runs to 427 residues: Trigger factor (427 aa).

The PPIase FKBP-type domain occupies 163-248 (GDIVVIDFAG…LKEIKRKELA (86 aa)).

This sequence belongs to the FKBP-type PPIase family. Tig subfamily.

Its subcellular location is the cytoplasm. The catalysed reaction is [protein]-peptidylproline (omega=180) = [protein]-peptidylproline (omega=0). Involved in protein export. Acts as a chaperone by maintaining the newly synthesized protein in an open conformation. Functions as a peptidyl-prolyl cis-trans isomerase. The sequence is that of Trigger factor from Carboxydothermus hydrogenoformans (strain ATCC BAA-161 / DSM 6008 / Z-2901).